Here is a 136-residue protein sequence, read N- to C-terminus: Cystatin-2 (136 aa).

The first 24 residues, 1-24, serve as a signal peptide directing secretion; sequence MALLRGFLVCSLLLLSCICKEALG. The region spanning 29–124 is the Cystatin domain; that stretch reads GGLENASPEE…CTFEVYNIPW (96 aa). The Secondary area of contact signature appears at 73–77; the sequence is QIVSG. 2 disulfides stabilise this stretch: C91-C101 and C115-C135.

Belongs to the cystatin family. As to expression, expressed by the venom gland.

It is found in the secreted. Functionally, inhibits various C1 cysteine proteases including cathepsin L, papain and cathepsin B. This protein has no toxic activity and its function in the venom is unknown. It may play a role as housekeeping or regulatory protein. The chain is Cystatin-2 from Crotalus adamanteus (Eastern diamondback rattlesnake).